Consider the following 272-residue polypeptide: Phytolongin Phyl2.2 (272 aa).

The Longin domain maps to 12-116 (CIAKGTVVLA…LINPVSHCLQ (105 aa)). A helical; Anchor for type IV membrane protein transmembrane segment spans residues 243–263 (WVVLMFDFCICAVLFGIWLWI).

The protein belongs to the synaptobrevin family.

It localises to the membrane. Non-SNARE longin protein involved in membrane-trafficking machinery. In Arabidopsis thaliana (Mouse-ear cress), this protein is Phytolongin Phyl2.2.